The chain runs to 393 residues: Lipid-A-disaccharide synthase (393 aa).

Belongs to the LpxB family.

The enzyme catalyses a lipid X + a UDP-2-N,3-O-bis[(3R)-3-hydroxyacyl]-alpha-D-glucosamine = a lipid A disaccharide + UDP + H(+). It functions in the pathway bacterial outer membrane biogenesis; LPS lipid A biosynthesis. Its function is as follows. Condensation of UDP-2,3-diacylglucosamine and 2,3-diacylglucosamine-1-phosphate to form lipid A disaccharide, a precursor of lipid A, a phosphorylated glycolipid that anchors the lipopolysaccharide to the outer membrane of the cell. The polypeptide is Lipid-A-disaccharide synthase (Bordetella petrii (strain ATCC BAA-461 / DSM 12804 / CCUG 43448)).